Here is a 363-residue protein sequence, read N- to C-terminus: uncharacterized protein (363 aa).

7 helical membrane passes run 20 to 40 (WFFT…NTNI), 63 to 83 (INFA…FLVM), 101 to 121 (FPLI…GVQS), 141 to 161 (SVWQ…FTAF), 186 to 206 (FSLL…IMLA), 227 to 247 (IFKY…CVVL), and 268 to 288 (FLIV…WYVL). The disordered stretch occupies residues 329-363 (PRADLTPNDTLHMESKKKPLSQSPRVVIEEEDVAE).

Its subcellular location is the membrane. This is an uncharacterized protein from Caenorhabditis elegans.